Consider the following 335-residue polypeptide: Ferrochelatase (335 aa).

The Fe cation site is built by His207 and Glu288.

It belongs to the ferrochelatase family.

Its subcellular location is the cytoplasm. It carries out the reaction heme b + 2 H(+) = protoporphyrin IX + Fe(2+). The protein operates within porphyrin-containing compound metabolism; protoheme biosynthesis; protoheme from protoporphyrin-IX: step 1/1. In terms of biological role, catalyzes the ferrous insertion into protoporphyrin IX. This is Ferrochelatase from Helicobacter pylori (strain HPAG1).